The primary structure comprises 130 residues: Small ribosomal subunit protein uS11 (130 aa).

Belongs to the universal ribosomal protein uS11 family. As to quaternary structure, part of the 30S ribosomal subunit. Interacts with proteins S7 and S18. Binds to IF-3.

Functionally, located on the platform of the 30S subunit, it bridges several disparate RNA helices of the 16S rRNA. Forms part of the Shine-Dalgarno cleft in the 70S ribosome. The chain is Small ribosomal subunit protein uS11 from Sulfurimonas denitrificans (strain ATCC 33889 / DSM 1251) (Thiomicrospira denitrificans (strain ATCC 33889 / DSM 1251)).